Consider the following 349-residue polypeptide: Ion-translocating oxidoreductase complex subunit D (349 aa).

3 helical membrane-spanning segments follow: residues 36–56 (CAFF…VALS), 77–99 (SAML…WMIV), and 124–144 (AMAA…SWIA). An FMN phosphoryl threonine modification is found at Thr-185. 5 helical membrane-spanning segments follow: residues 212 to 232 (GTGV…LVLL), 239 to 259 (WHIS…GFLL), 265 to 285 (ASPL…FIAT), 291 to 311 (ATSP…VYII), and 315 to 335 (GGYP…APFI).

This sequence belongs to the NqrB/RnfD family. The complex is composed of six subunits: RnfA, RnfB, RnfC, RnfD, RnfE and RnfG. Requires FMN as cofactor.

The protein localises to the cell inner membrane. Its function is as follows. Part of a membrane-bound complex that couples electron transfer with translocation of ions across the membrane. The polypeptide is Ion-translocating oxidoreductase complex subunit D (Shewanella sp. (strain ANA-3)).